Reading from the N-terminus, the 682-residue chain is Zinc finger protein 16 (682 aa).

Over residues Met-1–Glu-10 the composition is skewed to basic and acidic residues. The tract at residues Met-1 to Ala-43 is disordered. Positions Tyr-62–Ile-210 are necessary for transcription activation. The segment at Leu-209 to His-231 adopts a C2H2-type 1; degenerate zinc-finger fold. A C2H2-type 2; degenerate zinc finger spans residues Phe-237–His-259. Lys-253 is covalently cross-linked (Glycyl lysine isopeptide (Lys-Gly) (interchain with G-Cter in SUMO2)). 8 consecutive C2H2-type zinc fingers follow at residues Tyr-265–His-287, Tyr-293–His-315, Tyr-321–His-343, Tyr-349–His-371, Phe-377–His-399, Tyr-405–His-427, Tyr-433–His-455, and His-461–His-483. Required for nuclear localization stretches follow at residues Ser-268–Arg-393 and Arg-341–Gly-373. The required for nuclear localization stretch occupies residues Ser-473–Ala-503. Position 487 is an N6-acetyllysine (Lys-487). 7 consecutive C2H2-type zinc fingers follow at residues Tyr-489 to His-511, Tyr-517 to His-539, Tyr-545 to His-567, His-573 to His-595, Tyr-601 to His-623, Tyr-629 to His-651, and Tyr-657 to His-679.

Belongs to the krueppel C2H2-type zinc-finger protein family. Interacts with INCA1; the interaction inhibits INCA1 activity and induces the cell cycle process. Ubiquitous.

Its subcellular location is the nucleus. In terms of biological role, acts as a transcriptional activator. Promotes cell proliferation by facilitating the cell cycle phase transition from the S to G2/M phase. Involved in both the hemin- and phorbol myristate acetate (PMA)-induced erythroid and megakaryocytic differentiation, respectively. Also plays a role as an inhibitor of cell apoptosis. This is Zinc finger protein 16 (ZNF16) from Homo sapiens (Human).